Here is a 185-residue protein sequence, read N- to C-terminus: Ribosome-recycling factor (185 aa).

It belongs to the RRF family.

The protein resides in the cytoplasm. Functionally, responsible for the release of ribosomes from messenger RNA at the termination of protein biosynthesis. May increase the efficiency of translation by recycling ribosomes from one round of translation to another. The polypeptide is Ribosome-recycling factor (Bacillus anthracis (strain A0248)).